Reading from the N-terminus, the 149-residue chain is Calmodulin-1 (149 aa).

4 EF-hand domains span residues Glu8–Asn43, Pro44–Asp79, Asp81–Lys116, and Leu117–Lys149. Positions 21, 23, 25, 27, 32, 57, 59, 61, 63, 68, 94, 96, 98, 105, 130, 132, 134, 136, and 141 each coordinate Ca(2+).

The protein belongs to the calmodulin family. As to quaternary structure, interacts with ZAR1 (via CaMBD domain). Binds to IQD1. Binds to MEE62 in a calcium-dependent manner.

The protein localises to the cytoplasm. The protein resides in the cell membrane. Calmodulin mediates the control of a large number of enzymes, ion channels and other proteins by Ca(2+). Among the enzymes to be stimulated by the calmodulin-Ca(2+) complex are a number of protein kinases and phosphatases. In Arabidopsis thaliana (Mouse-ear cress), this protein is Calmodulin-1 (CAM1).